The chain runs to 307 residues: Homoserine kinase (307 aa).

91-101 (PLARGLGSSAA) is a binding site for ATP.

Belongs to the GHMP kinase family. Homoserine kinase subfamily.

The protein localises to the cytoplasm. It carries out the reaction L-homoserine + ATP = O-phospho-L-homoserine + ADP + H(+). It functions in the pathway amino-acid biosynthesis; L-threonine biosynthesis; L-threonine from L-aspartate: step 4/5. Functionally, catalyzes the ATP-dependent phosphorylation of L-homoserine to L-homoserine phosphate. The sequence is that of Homoserine kinase from Deinococcus radiodurans (strain ATCC 13939 / DSM 20539 / JCM 16871 / CCUG 27074 / LMG 4051 / NBRC 15346 / NCIMB 9279 / VKM B-1422 / R1).